Consider the following 122-residue polypeptide: Large ribosomal subunit protein uL14 (122 aa).

It belongs to the universal ribosomal protein uL14 family. As to quaternary structure, part of the 50S ribosomal subunit. Forms a cluster with proteins L3 and L19. In the 70S ribosome, L14 and L19 interact and together make contacts with the 16S rRNA in bridges B5 and B8.

Functionally, binds to 23S rRNA. Forms part of two intersubunit bridges in the 70S ribosome. The polypeptide is Large ribosomal subunit protein uL14 (Beutenbergia cavernae (strain ATCC BAA-8 / DSM 12333 / CCUG 43141 / JCM 11478 / NBRC 16432 / NCIMB 13614 / HKI 0122)).